Here is a 450-residue protein sequence, read N- to C-terminus: Tubulin alpha chain (450 aa).

8 residues coordinate GTP: Gln-11, Glu-71, Ser-140, Gly-144, Thr-145, Thr-179, Asn-206, and Asn-228. Residue Glu-71 participates in Mg(2+) binding. Residue Glu-254 is part of the active site.

It belongs to the tubulin family. In terms of assembly, dimer of alpha and beta chains. A typical microtubule is a hollow water-filled tube with an outer diameter of 25 nm and an inner diameter of 15 nM. Alpha-beta heterodimers associate head-to-tail to form protofilaments running lengthwise along the microtubule wall with the beta-tubulin subunit facing the microtubule plus end conferring a structural polarity. Microtubules usually have 13 protofilaments but different protofilament numbers can be found in some organisms and specialized cells. Mg(2+) serves as cofactor.

It is found in the cytoplasm. The protein resides in the cytoskeleton. The enzyme catalyses GTP + H2O = GDP + phosphate + H(+). In terms of biological role, tubulin is the major constituent of microtubules, a cylinder consisting of laterally associated linear protofilaments composed of alpha- and beta-tubulin heterodimers. Microtubules grow by the addition of GTP-tubulin dimers to the microtubule end, where a stabilizing cap forms. Below the cap, tubulin dimers are in GDP-bound state, owing to GTPase activity of alpha-tubulin. The sequence is that of Tubulin alpha chain from Zymoseptoria tritici (Speckled leaf blotch fungus).